Consider the following 477-residue polypeptide: MKILFVAAEGAPFSKTGGLGDVIGALPKSLVKAGHEVAVILPYYDMVEAKFGNQIEDVLHFEVSVGWRRQYCGIKKTVLNGVTFYFIDNQYYFFRGHVYGDFDDGERFAFFQLAAIEAMERIDFIPDLLHVHDYHTAMIPFLLKEKYRWIQAYEDIETVLTIHNLEFQGQFSEGMLGDLFGVGFERYADGTLRWNNCLNWMKAGILYANRVSTVSPSYAHEIMTSQFGCNLDQILKMESGKVSGIVNGIDADLYNPQTDALLDYHFNQEDLSGKAKNKAKLQERVGLPVRADVPLVGIVSRLTRQKGFDVVVESLHHILQEDVQIVLLGTGDPAFEGAFSWFAQIYPDKLSTNITFDVKLAQEIYAACDLFLMPSRFEPCGLSQMMAMRYGTLPLVHEVGGLRDTVRAFNPIEGSGTGFSFDNLSPYWLNWTFQTALDLYRNHPDIWRNLQKQAMESDFSWDTACKSYLDLYHSLVN.

K15 is a binding site for ADP-alpha-D-glucose.

It belongs to the glycosyltransferase 1 family. Bacterial/plant glycogen synthase subfamily.

It catalyses the reaction [(1-&gt;4)-alpha-D-glucosyl](n) + ADP-alpha-D-glucose = [(1-&gt;4)-alpha-D-glucosyl](n+1) + ADP + H(+). It functions in the pathway glycan biosynthesis; glycogen biosynthesis. Functionally, synthesizes alpha-1,4-glucan chains using ADP-glucose. This Streptococcus pneumoniae serotype 4 (strain ATCC BAA-334 / TIGR4) protein is Glycogen synthase.